Here is a 1076-residue protein sequence, read N- to C-terminus: DNA-directed RNA polymerase subunit beta (1076 aa).

The protein belongs to the RNA polymerase beta chain family. As to quaternary structure, in plastids the minimal PEP RNA polymerase catalytic core is composed of four subunits: alpha, beta, beta', and beta''. When a (nuclear-encoded) sigma factor is associated with the core the holoenzyme is formed, which can initiate transcription.

The protein resides in the plastid. It is found in the chloroplast. It carries out the reaction RNA(n) + a ribonucleoside 5'-triphosphate = RNA(n+1) + diphosphate. Its function is as follows. DNA-dependent RNA polymerase catalyzes the transcription of DNA into RNA using the four ribonucleoside triphosphates as substrates. The polypeptide is DNA-directed RNA polymerase subunit beta (Hordeum vulgare (Barley)).